A 152-amino-acid chain; its full sequence is 3-hydroxyacyl-[acyl-carrier-protein] dehydratase FabZ (152 aa).

H57 is a catalytic residue.

It belongs to the thioester dehydratase family. FabZ subfamily.

Its subcellular location is the cytoplasm. The catalysed reaction is a (3R)-hydroxyacyl-[ACP] = a (2E)-enoyl-[ACP] + H2O. Functionally, involved in unsaturated fatty acids biosynthesis. Catalyzes the dehydration of short chain beta-hydroxyacyl-ACPs and long chain saturated and unsaturated beta-hydroxyacyl-ACPs. The sequence is that of 3-hydroxyacyl-[acyl-carrier-protein] dehydratase FabZ from Bradyrhizobium sp. (strain ORS 278).